Here is a 430-residue protein sequence, read N- to C-terminus: Transcobalamin-2 (430 aa).

An N-terminal signal peptide occupies residues 1–18 (MELLKALLLLSGVFGALA). Disulfide bonds link Cys21/Cys270, Cys116/Cys312, and Cys165/Cys208. Residues 152-156 (TNYYQ), His193, 193-197 (HVSVD), Asn245, Ser248, Gln294, and 398-400 (WQL) each bind cob(II)alamin.

It belongs to the eukaryotic cobalamin transport proteins family. In terms of assembly, interacts with CD320 (via LDL-receptor class A domains).

It localises to the secreted. Functionally, primary vitamin B12-binding and transport protein. Delivers cobalamin to cells. The polypeptide is Transcobalamin-2 (Tcn2) (Mus musculus (Mouse)).